A 476-amino-acid chain; its full sequence is Arginine biosynthesis bifunctional protein ArgJ, mitochondrial (476 aa).

Substrate-binding residues include T193, K219, T237, E337, N471, and S476. Residue T237 is the Nucleophile of the active site.

It belongs to the ArgJ family. As to quaternary structure, heterodimer of an alpha and a beta chain. Post-translationally, the alpha and beta chains are autoproteolytically processed from a single precursor protein within the mitochondrion.

It localises to the mitochondrion matrix. The enzyme catalyses N(2)-acetyl-L-ornithine + L-glutamate = N-acetyl-L-glutamate + L-ornithine. It catalyses the reaction L-glutamate + acetyl-CoA = N-acetyl-L-glutamate + CoA + H(+). It functions in the pathway amino-acid biosynthesis; L-arginine biosynthesis; L-ornithine and N-acetyl-L-glutamate from L-glutamate and N(2)-acetyl-L-ornithine (cyclic): step 1/1. It participates in amino-acid biosynthesis; L-arginine biosynthesis; N(2)-acetyl-L-ornithine from L-glutamate: step 1/4. In terms of biological role, catalyzes two activities which are involved in the cyclic version of arginine biosynthesis: the synthesis of acetylglutamate from glutamate and acetyl-CoA, and of ornithine by transacetylation between acetylornithine and glutamate. The polypeptide is Arginine biosynthesis bifunctional protein ArgJ, mitochondrial (Cryptococcus neoformans var. neoformans serotype D (strain JEC21 / ATCC MYA-565) (Filobasidiella neoformans)).